Here is a 206-residue protein sequence, read N- to C-terminus: Holliday junction branch migration complex subunit RuvA (206 aa).

The tract at residues 1–64 (MIGRLHGIII…EDAQLLYGFN (64 aa)) is domain I. Residues 65 to 143 (TRQERTLFRE…GWISHDLFTP (79 aa)) form a domain II region. A flexible linker region spans residues 144–157 (YTDAAPVDHEPSLA). The interval 158–206 (PADTVESEAVAALLALGYKPQQASLVVSKVIKPEMTVENVIREALRSML) is domain III.

It belongs to the RuvA family. In terms of assembly, homotetramer. Forms an RuvA(8)-RuvB(12)-Holliday junction (HJ) complex. HJ DNA is sandwiched between 2 RuvA tetramers; dsDNA enters through RuvA and exits via RuvB. An RuvB hexamer assembles on each DNA strand where it exits the tetramer. Each RuvB hexamer is contacted by two RuvA subunits (via domain III) on 2 adjacent RuvB subunits; this complex drives branch migration. In the full resolvosome a probable DNA-RuvA(4)-RuvB(12)-RuvC(2) complex forms which resolves the HJ.

The protein resides in the cytoplasm. The RuvA-RuvB-RuvC complex processes Holliday junction (HJ) DNA during genetic recombination and DNA repair, while the RuvA-RuvB complex plays an important role in the rescue of blocked DNA replication forks via replication fork reversal (RFR). RuvA specifically binds to HJ cruciform DNA, conferring on it an open structure. The RuvB hexamer acts as an ATP-dependent pump, pulling dsDNA into and through the RuvAB complex. HJ branch migration allows RuvC to scan DNA until it finds its consensus sequence, where it cleaves and resolves the cruciform DNA. The protein is Holliday junction branch migration complex subunit RuvA of Tolumonas auensis (strain DSM 9187 / NBRC 110442 / TA 4).